Reading from the N-terminus, the 314-residue chain is Putative S-adenosyl-L-methionine-dependent methyltransferase MMAR_5323 (314 aa).

S-adenosyl-L-methionine is bound by residues D132 and 161 to 162; that span reads DL.

The protein belongs to the UPF0677 family.

Functionally, exhibits S-adenosyl-L-methionine-dependent methyltransferase activity. This is Putative S-adenosyl-L-methionine-dependent methyltransferase MMAR_5323 from Mycobacterium marinum (strain ATCC BAA-535 / M).